The primary structure comprises 340 residues: Predicted GPI-anchored protein 46 (340 aa).

The signal sequence occupies residues Met1 to Thr29. A compositionally biased stretch (low complexity) spans Ser99–Thr115. Disordered stretches follow at residues Ser99–Ser154 and Met181–Tyr212. An N-linked (GlcNAc...) asparagine glycan is attached at Asn127. Positions Ser182–Ser191 are enriched in low complexity. Positions Leu192–Asn202 are enriched in basic and acidic residues. Asn270 is a glycosylation site (N-linked (GlcNAc...) asparagine). A lipid anchor (GPI-anchor amidated asparagine) is attached at Asn314. The propeptide at Ser315–Gly340 is removed in mature form.

The protein resides in the cell membrane. The protein localises to the secreted. This chain is Predicted GPI-anchored protein 46 (PGA46), found in Candida albicans (strain SC5314 / ATCC MYA-2876) (Yeast).